The sequence spans 182 residues: MPLSVEQALANFSQRYVEAWKEKHDSLPINEELVGLASPCIDETRNLEVLWQPVARDESIRLVNIENGIELDLHDDFHAFYGAQFSADMTAKFEGMNVELLQIWSDEDLENLQGNMLGHLVMQRRLKLVPTLFIAVTDDEMEVISICNQSGEVILDTVGTKKRKVLAESMAEFLEKLEPVVA.

Belongs to the Syd family.

Its subcellular location is the cell inner membrane. Functionally, interacts with the SecY protein in vivo. May bind preferentially to an uncomplexed state of SecY, thus functioning either as a chelating agent for excess SecY in the cell or as a regulatory factor that negatively controls the translocase function. This Aliivibrio salmonicida (strain LFI1238) (Vibrio salmonicida (strain LFI1238)) protein is Protein Syd.